The following is a 304-amino-acid chain: N-acetylmuramic acid 6-phosphate etherase 1 (304 aa).

Polar residues predominate over residues 1 to 10 (MENSHLGSLT). The disordered stretch occupies residues 1–20 (MENSHLGSLTTERRNERSKR). The region spanning 58–221 (AVGSLKKGGR…STAAMIKMGK (164 aa)) is the SIS domain. The Proton donor role is filled by E86. E117 is an active-site residue.

This sequence belongs to the GCKR-like family. MurNAc-6-P etherase subfamily. As to quaternary structure, homodimer.

It catalyses the reaction N-acetyl-D-muramate 6-phosphate + H2O = N-acetyl-D-glucosamine 6-phosphate + (R)-lactate. It participates in amino-sugar metabolism; N-acetylmuramate degradation. Its function is as follows. Specifically catalyzes the cleavage of the D-lactyl ether substituent of MurNAc 6-phosphate, producing GlcNAc 6-phosphate and D-lactate. This is N-acetylmuramic acid 6-phosphate etherase 1 from Bacillus licheniformis (strain ATCC 14580 / DSM 13 / JCM 2505 / CCUG 7422 / NBRC 12200 / NCIMB 9375 / NCTC 10341 / NRRL NRS-1264 / Gibson 46).